Consider the following 686-residue polypeptide: Glycogenin (686 aa).

Residues L13, N16, Y19, and R82 each coordinate UDP. Positions 13, 16, 19, 82, 91, 107, 108, 109, 139, 140, 166, 169, and 170 each coordinate UDP-alpha-D-glucose. UDP-binding residues include D107, A108, and D109. D107 is a Mn(2+) binding site. Residue D109 participates in Mn(2+) binding. O-linked (Glc...) tyrosine glycosylation is found at Y196 and Y198. H213, G216, and K219 together coordinate UDP. H213 serves as a coordination point for Mn(2+). UDP-alpha-D-glucose-binding residues include G216 and K219. 4 disordered regions span residues 264–331 (VKGE…ANFP), 381–444 (PEPT…RGNA), 460–533 (KHRR…GVPA), and 603–686 (KPLR…VLET). Low complexity-rich tracts occupy residues 285-308 (SSQS…YTSH) and 398-416 (SAAS…ASPT). Residues 307-686 (SHGASWDASR…TEEERDVLET (380 aa)) are not required for catalytic activity. Polar residues-rich tracts occupy residues 424–442 (VTPT…TTRG) and 471–483 (AATS…GRAQ). Residues 677-686 (TEEERDVLET) are compositionally biased toward acidic residues.

It belongs to the glycosyltransferase 8 family. Glycogenin subfamily. Interacts with glycogen synthase gsy-1; the interaction is direct. It depends on Mn(2+) as a cofactor.

Its subcellular location is the cytoplasm. The protein resides in the vacuole. It carries out the reaction L-tyrosyl-[glycogenin] + UDP-alpha-D-glucose = alpha-D-glucosyl-L-tyrosyl-[glycogenin] + UDP + H(+). The enzyme catalyses [1,4-alpha-D-glucosyl](n)-L-tyrosyl-[glycogenin] + UDP-alpha-D-glucose = [1,4-alpha-D-glucosyl](n+1)-L-tyrosyl-[glycogenin] + UDP + H(+). Its function is as follows. Self-glucosylating initiator of glycogen synthesis. It catalyzes the formation of a short alpha (1,4)-glucosyl chain covalently attached via a glucose 1-O-tyrosyl linkage to internal tyrosine residues and these chains act as primers for the elongation reaction catalyzed by glycogen synthase. The chain is Glycogenin from Neurospora crassa (strain ATCC 24698 / 74-OR23-1A / CBS 708.71 / DSM 1257 / FGSC 987).